The sequence spans 162 residues: Endoribonuclease YbeY (162 aa).

Zn(2+) contacts are provided by histidine 118, histidine 122, and histidine 128.

It belongs to the endoribonuclease YbeY family. The cofactor is Zn(2+).

It is found in the cytoplasm. Its function is as follows. Single strand-specific metallo-endoribonuclease involved in late-stage 70S ribosome quality control and in maturation of the 3' terminus of the 16S rRNA. This chain is Endoribonuclease YbeY, found in Glaesserella parasuis serovar 5 (strain SH0165) (Haemophilus parasuis).